The sequence spans 350 residues: tRNA N6-adenosine threonylcarbamoyltransferase (350 aa).

Fe cation is bound by residues H113 and H117. Residues 135–139, D169, G182, D186, and N282 contribute to the substrate site; that span reads LVSGG. Residue D310 coordinates Fe cation.

The protein belongs to the KAE1 / TsaD family. Requires Fe(2+) as cofactor.

Its subcellular location is the cytoplasm. It catalyses the reaction L-threonylcarbamoyladenylate + adenosine(37) in tRNA = N(6)-L-threonylcarbamoyladenosine(37) in tRNA + AMP + H(+). Functionally, required for the formation of a threonylcarbamoyl group on adenosine at position 37 (t(6)A37) in tRNAs that read codons beginning with adenine. Is involved in the transfer of the threonylcarbamoyl moiety of threonylcarbamoyl-AMP (TC-AMP) to the N6 group of A37, together with TsaE and TsaB. TsaD likely plays a direct catalytic role in this reaction. The polypeptide is tRNA N6-adenosine threonylcarbamoyltransferase (Corynebacterium diphtheriae (strain ATCC 700971 / NCTC 13129 / Biotype gravis)).